The following is a 288-amino-acid chain: Bifunctional protein FolD (288 aa).

NADP(+) is bound by residues Gly-166–Ser-168 and Ile-232.

This sequence belongs to the tetrahydrofolate dehydrogenase/cyclohydrolase family. As to quaternary structure, homodimer.

The catalysed reaction is (6R)-5,10-methylene-5,6,7,8-tetrahydrofolate + NADP(+) = (6R)-5,10-methenyltetrahydrofolate + NADPH. It carries out the reaction (6R)-5,10-methenyltetrahydrofolate + H2O = (6R)-10-formyltetrahydrofolate + H(+). It participates in one-carbon metabolism; tetrahydrofolate interconversion. Functionally, catalyzes the oxidation of 5,10-methylenetetrahydrofolate to 5,10-methenyltetrahydrofolate and then the hydrolysis of 5,10-methenyltetrahydrofolate to 10-formyltetrahydrofolate. The chain is Bifunctional protein FolD from Acidithiobacillus ferrooxidans (strain ATCC 23270 / DSM 14882 / CIP 104768 / NCIMB 8455) (Ferrobacillus ferrooxidans (strain ATCC 23270)).